Here is a 767-residue protein sequence, read N- to C-terminus: 5-methyltetrahydropteroyltriglutamate--homocysteine methyltransferase (767 aa).

Residues 16–19 and Lys122 contribute to the 5-methyltetrahydropteroyltri-L-glutamate site; that span reads RELK. L-homocysteine-binding positions include 443–445 and Glu496; that span reads IGS. Residues 443 to 445 and Glu496 each bind L-methionine; that span reads IGS. Residues 527–528 and Trp573 contribute to the 5-methyltetrahydropteroyltri-L-glutamate site; that span reads RC. Asp611 serves as a coordination point for L-homocysteine. Residue Asp611 participates in L-methionine binding. Residue Glu617 coordinates 5-methyltetrahydropteroyltri-L-glutamate. 3 residues coordinate Zn(2+): His653, Cys655, and Glu677. Catalysis depends on His706, which acts as the Proton donor. Cys738 lines the Zn(2+) pocket.

Belongs to the vitamin-B12 independent methionine synthase family. Zn(2+) is required as a cofactor.

The enzyme catalyses 5-methyltetrahydropteroyltri-L-glutamate + L-homocysteine = tetrahydropteroyltri-L-glutamate + L-methionine. It participates in amino-acid biosynthesis; L-methionine biosynthesis via de novo pathway; L-methionine from L-homocysteine (MetE route): step 1/1. Catalyzes the transfer of a methyl group from 5-methyltetrahydrofolate to homocysteine resulting in methionine formation. This Ectopseudomonas mendocina (strain ymp) (Pseudomonas mendocina) protein is 5-methyltetrahydropteroyltriglutamate--homocysteine methyltransferase.